The sequence spans 247 residues: PF03932 family protein CutC (247 aa).

The protein belongs to the CutC family.

Its subcellular location is the cytoplasm. The chain is PF03932 family protein CutC from Klebsiella pneumoniae (strain 342).